Consider the following 336-residue polypeptide: tRNA-cytidine(32) 2-sulfurtransferase (336 aa).

Residues 11-23 (TAAAPAGTGEATP) show a composition bias toward low complexity. The tract at residues 11–31 (TAAAPAGTGEATPVHARARSP) is disordered. Residues 75 to 80 (SGGKDS) carry the PP-loop motif motif. 3 residues coordinate [4Fe-4S] cluster: cysteine 150, cysteine 153, and cysteine 241.

Belongs to the TtcA family. In terms of assembly, homodimer. Requires Mg(2+) as cofactor. [4Fe-4S] cluster serves as cofactor.

It is found in the cytoplasm. It carries out the reaction cytidine(32) in tRNA + S-sulfanyl-L-cysteinyl-[cysteine desulfurase] + AH2 + ATP = 2-thiocytidine(32) in tRNA + L-cysteinyl-[cysteine desulfurase] + A + AMP + diphosphate + H(+). The protein operates within tRNA modification. In terms of biological role, catalyzes the ATP-dependent 2-thiolation of cytidine in position 32 of tRNA, to form 2-thiocytidine (s(2)C32). The sulfur atoms are provided by the cysteine/cysteine desulfurase (IscS) system. This chain is tRNA-cytidine(32) 2-sulfurtransferase, found in Paraburkholderia xenovorans (strain LB400).